The following is a 22-amino-acid chain: Probable ATP-dependent Clp protease proteolytic subunit (22 aa).

Belongs to the peptidase S14 family. Component of the chloroplastic Clp protease core complex.

It catalyses the reaction Hydrolysis of proteins to small peptides in the presence of ATP and magnesium. alpha-casein is the usual test substrate. In the absence of ATP, only oligopeptides shorter than five residues are hydrolyzed (such as succinyl-Leu-Tyr-|-NHMec, and Leu-Tyr-Leu-|-Tyr-Trp, in which cleavage of the -Tyr-|-Leu- and -Tyr-|-Trp bonds also occurs).. Its function is as follows. Cleaves peptides in various proteins in a process that requires ATP hydrolysis. Has a chymotrypsin-like activity. Plays a major role in the degradation of misfolded proteins. The chain is Probable ATP-dependent Clp protease proteolytic subunit from Populus euphratica (Euphrates poplar).